Reading from the N-terminus, the 416-residue chain is MTIIEELGKKAKQASYDLLGLSTIEKNQMLTQLAKDLIEKSDFIIDENQKDLQKAEENGISEVMVDRLKLTAERIKGISEGVLQVAELEDPIGQVIKGYTNLDGLKIVQKRVPLGVIAMIFESRPNVSVDAFSLAFKTNNAIILRGGRDALHSNMALVQVIRETLIRLGHNPDAVQLLEDPSHDLAEALMSATEYVDVLIPRGGAKLIQTVKEKAKVPVIETGVGNVHIYVDATADLEMAKSIVINAKTQRPSVCNAAESLIIHEEVAENFIPLLEDAIEAVHKVEFRVDDKGYSLFKHAVKATENDYATEFLDYILSVKIVSSLDEAISWINRYTSHHSEAIVTRDIQAAERFQEEIDAAAVYVNASTRFTDGFVFGLGAEIGISTQKMHARGPMGLEALTSSKYYINGNGQIRE.

It belongs to the gamma-glutamyl phosphate reductase family.

The protein resides in the cytoplasm. It catalyses the reaction L-glutamate 5-semialdehyde + phosphate + NADP(+) = L-glutamyl 5-phosphate + NADPH + H(+). Its pathway is amino-acid biosynthesis; L-proline biosynthesis; L-glutamate 5-semialdehyde from L-glutamate: step 2/2. In terms of biological role, catalyzes the NADPH-dependent reduction of L-glutamate 5-phosphate into L-glutamate 5-semialdehyde and phosphate. The product spontaneously undergoes cyclization to form 1-pyrroline-5-carboxylate. This Streptococcus uberis (strain ATCC BAA-854 / 0140J) protein is Gamma-glutamyl phosphate reductase.